Consider the following 184-residue polypeptide: MPEPIQIAEEKMKKAIETLKEEFATVRAGRANPHILDKVMVDYYGVPTPIPQLASITVPEARMIVIQPWEARMLKEIEKAIQKADLGVNPANDGKVIRLIFPELTEERRKELVKQVKKMAEDAKVAIRNIRREAIDEYKKMKKNNEITEDDLKDAEEDVQKLHDKYIEQIEKLLSAKEKEIMEV.

Belongs to the RRF family.

It is found in the cytoplasm. In terms of biological role, responsible for the release of ribosomes from messenger RNA at the termination of protein biosynthesis. May increase the efficiency of translation by recycling ribosomes from one round of translation to another. The polypeptide is Ribosome-recycling factor (Caldicellulosiruptor saccharolyticus (strain ATCC 43494 / DSM 8903 / Tp8T 6331)).